The sequence spans 198 residues: Recombination protein RecR (198 aa).

The C4-type zinc finger occupies 56 to 71 (CKVCGNFSEEDECVIC). One can recognise a Toprim domain in the interval 79–174 (GVICVVEEPK…RVSKLASGLP (96 aa)).

Belongs to the RecR family.

May play a role in DNA repair. It seems to be involved in an RecBC-independent recombinational process of DNA repair. It may act with RecF and RecO. This is Recombination protein RecR from Tropheryma whipplei (strain Twist) (Whipple's bacillus).